The following is a 507-amino-acid chain: RNA polymerase I-specific transcription initiation factor RRN11 (507 aa).

The segment covering 37 to 47 (KSTTTDSLPTP) has biased composition (polar residues). Disordered regions lie at residues 37 to 76 (KSTTTDSLPTPENSAAENNDEEEGQNSEAGTYRRSVLQQK) and 89 to 124 (GEIYSTTESETDSQEEETEEGGEHDTGIDKEDSDEE). Positions 97 to 108 (SETDSQEEETEE) are enriched in acidic residues. Residues 109-124 (GGEHDTGIDKEDSDEE) are compositionally biased toward basic and acidic residues.

Component of the core factor (CF) complex, which consists of RRN6, RRN7 and RRN11. The CF heterotrimer may further dimerize to form a hexamer. RRN11 interacts with RRN6, RRN7 and SPT15.

It localises to the nucleus. The protein resides in the nucleolus. Functionally, acts as a component of the core factor (CF) complex which is essential for the initiation of rDNA transcription by RNA polymerase I. After binding of UAF (upstream activation factor) to an upstream element of the promoter, CF is recruited in a SPT15/TBP-dependent manner to form a preinitiation complex. This Saccharomyces cerevisiae (strain ATCC 204508 / S288c) (Baker's yeast) protein is RNA polymerase I-specific transcription initiation factor RRN11 (RRN11).